Reading from the N-terminus, the 410-residue chain is Sprouty-related, EVH1 domain-containing protein 2 (410 aa).

The 118-residue stretch at 5 to 122 (THPDDDSYIV…RGVRKAIEDL (118 aa)) folds into the WH1 domain. The interval 127–171 (TTSSSTLHNEAELGDDDVFTTATDSSSNSSQKREPTTRTISSPTS) is disordered. Over residues 146–156 (TTATDSSSNSS) the composition is skewed to polar residues. One can recognise a KBD domain in the interval 197-252 (SYPQVTFPEDDEEIVRINPREKIWMTGYEDYRHAPVRGKYLDTTEDADSYVRFAKG). Residues Y224 and Y227 each carry the phosphotyrosine modification. The interval 274–294 (DPKGSVIKTQPPRAKSRRRKE) is disordered. In terms of domain architecture, SPR spans 300–408 (RCVYCRDMFN…CRCCGGKHKA (109 aa)).

As to quaternary structure, homodimer and heterodimer. Able to interact with SPRED1 to form heterodimers. Interacts with RAS. May interact with ZDHHC13 (via ANK repeats) and ZDHHC17 (via ANK repeats). Interacts with TESK1. Interacts with NF1. Phosphorylated on serine and threonine residues. Phosphorylated on tyrosine. Phosphorylation of Tyr-224 and Tyr-227 are required for ubiquitination. In terms of processing, ubiquitinated; leading to degradation by the proteasome. Predominantly expressed in lung, liver and testis. In testis, it is specially found in mature spermatids projecting into the lumen of the seminiferous. Strongly expressed in glandular epithelia. Also expressed in embryonic tissues such as heart, lung, liver and brain.

It localises to the cell membrane. Its subcellular location is the cytoplasmic vesicle. The protein resides in the secretory vesicle membrane. It is found in the cytoplasm. Its function is as follows. Negatively regulates Ras signaling pathways and downstream activation of MAP kinases. Recruits and translocates NF1 to the cell membrane, thereby enabling NF1-dependent hydrolysis of active GTP-bound Ras to inactive GDP-bound Ras. Inhibits fibroblast growth factor (FGF)-induced retinal lens fiber differentiation, probably by inhibiting FGF-mediated phosphorylation of ERK1/2. Inhibits TGFB-induced epithelial-to-mesenchymal transition in lens epithelial cells. This Mus musculus (Mouse) protein is Sprouty-related, EVH1 domain-containing protein 2 (Spred2).